The following is a 284-amino-acid chain: MDFIRAIILGIIEGITEWLPISSTGHLIIADEFIRLNQSAAFKEMFDVVIQLGAILSVVVLYFHKLNPFNKLNPADKQKTPREIQLTWRLWLKVLIAALPAAIIGLPLNDWLDKHFYHFVPVAFMLIIYGVAFIVIERRWVPNHEFSVMDIDRLPYRAALYIGLFQVLSLLPGTSRSGATIVGALLIGVSREVAAEFTFFLGIPVMFGASFIKILHFFKNGNSLNLEQFGVLLVACLVAFGVSMIAIKFLTDYVKKHDFTFFGKYRIVLGIVLLIYAAFKAFLG.

8 consecutive transmembrane segments (helical) span residues 7–27 (IILGIIEGITEWLPISSTGHL), 44–64 (EMFDVVIQLGAILSVVVLYFH), 90–110 (LWLKVLIAALPAAIIGLPLND), 116–136 (FYHFVPVAFMLIIYGVAFIVI), 167–187 (VLSLLPGTSRSGATIVGALLI), 197–217 (FTFFLGIPVMFGASFIKILHF), 229–249 (FGVLLVACLVAFGVSMIAIKF), and 259–279 (FTFFGKYRIVLGIVLLIYAAF).

It belongs to the UppP family.

It localises to the cell membrane. The catalysed reaction is di-trans,octa-cis-undecaprenyl diphosphate + H2O = di-trans,octa-cis-undecaprenyl phosphate + phosphate + H(+). Catalyzes the dephosphorylation of undecaprenyl diphosphate (UPP). Confers resistance to bacitracin. The sequence is that of Undecaprenyl-diphosphatase from Lactococcus lactis subsp. cremoris (strain SK11).